The following is a 563-amino-acid chain: Probable terpene synthase 4 (563 aa).

Mg(2+)-binding residues include aspartate 316, aspartate 320, and glutamate 469. The DDXXD motif motif lies at 316-320 (DDIFD).

The protein belongs to the terpene synthase family. Requires Mg(2+) as cofactor.

Its function is as follows. Probable sesquiterpene synthase. The protein is Probable terpene synthase 4 (TPS4) of Ricinus communis (Castor bean).